A 179-amino-acid chain; its full sequence is Large ribosomal subunit protein uL5 (179 aa).

Belongs to the universal ribosomal protein uL5 family. As to quaternary structure, part of the 50S ribosomal subunit; part of the 5S rRNA/L5/L18/L25 subcomplex. Contacts the 5S rRNA and the P site tRNA. Forms a bridge to the 30S subunit in the 70S ribosome.

Its function is as follows. This is one of the proteins that bind and probably mediate the attachment of the 5S RNA into the large ribosomal subunit, where it forms part of the central protuberance. In the 70S ribosome it contacts protein S13 of the 30S subunit (bridge B1b), connecting the 2 subunits; this bridge is implicated in subunit movement. Contacts the P site tRNA; the 5S rRNA and some of its associated proteins might help stabilize positioning of ribosome-bound tRNAs. This is Large ribosomal subunit protein uL5 from Burkholderia mallei (strain NCTC 10247).